Consider the following 583-residue polypeptide: SHC-transforming protein 1 (583 aa).

An N-acetylmethionine modification is found at Met-1. Disordered regions lie at residues 1 to 92 and 113 to 137; these read MDLL…DDGE and KLSG…WTRH. Positions 16 to 44 are enriched in low complexity; that stretch reads ESLSSLEEGASGSTPPEELPSPSASSLGP. Position 36 is a phosphoserine (Ser-36). Ser-139 is subject to Phosphoserine. The residue at position 154 (Lys-154) is an N6-acetyllysine. The region spanning 156-339 is the PID domain; that stretch reads MGPGVSYLVR…AGFDGSAWDE (184 aa). The tract at residues 340 to 487 is CH1; it reads EEEEPPDHQY…SMAEQLRGEP (148 aa). 2 positions are modified to phosphotyrosine: Tyr-349 and Tyr-350. Residues 372–416 are disordered; the sequence is AAPGAARSTAPSAQTPSHLGATLPVGQPVGGDPEVRKQMPPPPPC. The residue at position 427 (Tyr-427) is a Phosphotyrosine. Residue Ser-453 is modified to Phosphoserine. In terms of domain architecture, SH2 spans 488–579; it reads WFHGKLSRRE…GSELCLQQPV (92 aa).

In terms of assembly, interacts with CPNE3; this interaction may mediate the binding of CPNE3 with ERBB2. Interacts with the Trk receptors NTRK1, NTRK2 and NTRK3; in a phosphotyrosine-dependent manner. Interacts with the NPXY motif of tyrosine-phosphorylated IGF1R and INSR in vitro via the PID domain. Once activated, binds to GRB2. Interacts with tyrosine-phosphorylated CD3T and DDR2. Interacts with the N-terminal region of APS. Interacts with phosphorylated LRP1 and IRS4. Interacts with INPP5D/SHIP1 and INPPL1/SHIP2. Interacts with ALK, GAB2, GRB7 and KIT. Interacts with PTPN6/SHP (tyrosine phosphorylated). Identified in a complex containing FGFR4, NCAM1, CDH2, PLCG1, FRS2, SRC, SHC1, GAP43 and CTTN. Interacts with FLT4 (tyrosine-phosphorylated). Interacts with EPHB1 and GRB2; activates the MAPK/ERK cascade to regulate cell migration. Interacts with PDGFRB (tyrosine-phosphorylated). Interacts with ERBB4. Interacts with TEK/TIE2 (tyrosine-phosphorylated). Interacts with PTK2/FAK1. Interacts with CEACAM1; this interaction is CEACAM1-phosphorylation-dependent and mediates interaction with EGFR or INSR resulting in decrease coupling of SHC1 to the MAPK3/ERK1-MAPK1/ERK2 pathway. Interacts (via PID domain) with PEAK1 (when phosphorylated). Found in a complex with PPP1CA, PPP1CC, SHC1 and PEAK1. Post-translationally, phosphorylated by activated epidermal growth factor receptor. Phosphorylated in response to KIT signaling. Tyrosine phosphorylated in response to FLT3 and FLT4 signaling and by ligand-activated ALK. Tyrosine phosphorylated by ligand-activated PDGFRB. Tyrosine phosphorylated by TEK/TIE2. May be tyrosine phosphorylated by activated PTK2/FAK1. Tyrosine phosphorylated by activated PTK2B/PYK2. Dephosphorylation by PTPN2 may regulate interaction with GRB2.

It is found in the cytoplasm. Its subcellular location is the cell junction. The protein localises to the focal adhesion. In terms of biological role, signaling adapter that couples activated growth factor receptors to signaling pathways. Participates in a signaling cascade initiated by activated KIT and KITLG/SCF. Participates in signaling downstream of the angiopoietin receptor TEK/TIE2, and plays a role in the regulation of endothelial cell migration and sprouting angiogenesis. The polypeptide is SHC-transforming protein 1 (SHC1) (Pongo abelii (Sumatran orangutan)).